The chain runs to 243 residues: UMP-CMP kinase 1 (243 aa).

Residue 29-34 (GSGKGT) coordinates ATP. The interval 49–78 (SAGDLLREEAKYDTEQGTMIKNLMNEGKLV) is NMP. A ribonucleoside 5'-phosphate is bound by residues Arg55, 76–78 (KLV), and 103–106 (GFPR). Asn110 lines the CMP pocket. The LID stretch occupies residues 141-149 (NRNQGRDDD). Arg142 contributes to the ATP binding site. 2 residues coordinate a ribonucleoside 5'-phosphate: Arg146 and Arg157. Arg185 is a binding site for ATP.

It belongs to the adenylate kinase family. UMP-CMP kinase subfamily. As to quaternary structure, monomer. Mg(2+) serves as cofactor.

Its subcellular location is the cytoplasm. The protein localises to the nucleus. The enzyme catalyses UMP + ATP = UDP + ADP. It carries out the reaction CMP + ATP = CDP + ADP. It catalyses the reaction dCMP + ATP = dCDP + ADP. Functionally, catalyzes the phosphorylation of pyrimidine nucleoside monophosphates at the expense of ATP. Plays an important role in de novo pyrimidine nucleotide biosynthesis. Has preference for UMP and CMP as phosphate acceptors. The protein is UMP-CMP kinase 1 of Oryza sativa subsp. japonica (Rice).